The primary structure comprises 172 residues: Small ribosomal subunit protein uS5 (172 aa).

The 64-residue stretch at 17 to 80 folds into the S5 DRBM domain; that stretch reads LREKMISVNR…EQARRNMFKV (64 aa).

Belongs to the universal ribosomal protein uS5 family. In terms of assembly, part of the 30S ribosomal subunit. Contacts proteins S4 and S8.

Its function is as follows. With S4 and S12 plays an important role in translational accuracy. Located at the back of the 30S subunit body where it stabilizes the conformation of the head with respect to the body. The polypeptide is Small ribosomal subunit protein uS5 (Paraburkholderia xenovorans (strain LB400)).